The primary structure comprises 1758 residues: RanBP2-like and GRIP domain-containing protein 3 (1758 aa).

Phosphoserine is present on serine 21. The stretch at 60 to 93 (PRAHRFLGLLYELEENTEKAVECYRRSVELNPTQ) is one TPR 1 repeat. A coiled-coil region spans residues 176 to 229 (RSTKRLKDAVARCHEAERNIALRSSLEWNSCVVQTLKEYLESLQCLESDKSDWR). The stretch at 584 to 617 (QKMGSGLNSFYDQREYIGRSVHYWKKVLPLLKII) is one TPR 2 repeat. The disordered stretch occupies residues 761-805 (GPLYKNGSLRNADSEIKHSTPSPTKYSLSPSKSYKYSPKTPPRWA). The segment covering 779–798 (STPSPTKYSLSPSKSYKYSP) has biased composition (low complexity). Residues 805–837 (AEDQNSLLKMIRQEVKAIKEEMQELKLNSSKSA) adopt a coiled-coil conformation. Positions 1037 to 1173 (HFEPVVQMPE…FEECQRLLLD (137 aa)) constitute a RanBD1 1 domain. 3 disordered regions span residues 1216 to 1248 (VAEEENKGSGTGAAGASDTTIKPNAENTGPTLE), 1307 to 1335 (AKLNQSGTSVGTDEESDVTQEEERDGQYF), and 1581 to 1622 (NNSE…KNLS). Residues 1236–1245 (IKPNAENTGP) show a composition bias toward polar residues. Acidic residues predominate over residues 1318-1330 (TDEESDVTQEEER). The region spanning 1334-1470 (YFEPVVPLPD…FDEAKTAQEK (137 aa)) is the RanBD1 2 domain. Polar residues predominate over residues 1581 to 1594 (NNSETSSVAQSGSE). A compositionally biased stretch (basic and acidic residues) spans 1595–1618 (SKVEPKKCELSKNSDIEQSSDSKV). The GRIP domain maps to 1703-1753 (QEVSAANVEHLKNVLLQFIFLKPGSERERLLPVINTMLQLSLEEKGKLAAV).

This Homo sapiens (Human) protein is RanBP2-like and GRIP domain-containing protein 3 (RGPD3).